The following is a 486-amino-acid chain: ATP synthase subunit beta (486 aa).

Glycine 167–threonine 174 contacts ATP.

This sequence belongs to the ATPase alpha/beta chains family. F-type ATPases have 2 components, CF(1) - the catalytic core - and CF(0) - the membrane proton channel. CF(1) has five subunits: alpha(3), beta(3), gamma(1), delta(1), epsilon(1). CF(0) has three main subunits: a(1), b(2) and c(9-12). The alpha and beta chains form an alternating ring which encloses part of the gamma chain. CF(1) is attached to CF(0) by a central stalk formed by the gamma and epsilon chains, while a peripheral stalk is formed by the delta and b chains.

It localises to the cell inner membrane. The enzyme catalyses ATP + H2O + 4 H(+)(in) = ADP + phosphate + 5 H(+)(out). In terms of biological role, produces ATP from ADP in the presence of a proton gradient across the membrane. The catalytic sites are hosted primarily by the beta subunits. The protein is ATP synthase subunit beta of Anaplasma marginale (strain St. Maries).